Consider the following 396-residue polypeptide: Calreticulin (396 aa).

A signal peptide spans 1-15 (MKSLCLLAIVAVVSA). Cys101 and Cys133 are disulfide-bonded. Positions 105, 107, 124, and 131 each coordinate an alpha-D-glucoside. 7 tandem repeats follow at residues 186–197 (AQTGSLEEDWDL), 205–216 (DPDAKKPEDWDE), 222–233 (DAEDVKPEDWEK), 239–250 (DPDAKKPEDWDD), 254–264 (GEWEPPMIDNP), 268–278 (GEWKPKQIKNP), and 282–292 (GKWIHPEIENP). The tract at residues 186 to 250 (AQTGSLEEDW…DAKKPEDWDD (65 aa)) is 4 X approximate repeats. A P-domain region spans residues 193–301 (EDWDLLPAKK…PEYTPDDELY (109 aa)). Basic and acidic residues predominate over residues 202–212 (KIKDPDAKKPE). The disordered stretch occupies residues 202-250 (KIKDPDAKKPEDWDEREYIDDAEDVKPEDWEKPEHIPDPDAKKPEDWDD). A compositionally biased stretch (acidic residues) spans 213-224 (DWDEREYIDDAE). A compositionally biased stretch (basic and acidic residues) spans 225–246 (DVKPEDWEKPEHIPDPDAKKPE). The interval 254–292 (GEWEPPMIDNPEYKGEWKPKQIKNPAYKGKWIHPEIENP) is 3 X approximate repeats. Positions 302 to 396 (LYENWGAIGF…KEEEEGHDEL (95 aa)) are C-domain. Asp312 contributes to the an alpha-D-glucoside binding site. The span at 342-380 (FDKLKTVEKEKKEKADEEARKVEEEARKKAEEEKEAKKD) shows a compositional bias: basic and acidic residues. The disordered stretch occupies residues 342–396 (FDKLKTVEKEKKEKADEEARKVEEEARKKAEEEKEAKKDDDEEEEKEEEEGHDEL). Residues 381–396 (DDEEEEKEEEEGHDEL) are compositionally biased toward acidic residues. The Prevents secretion from ER motif lies at 393-396 (HDEL).

It belongs to the calreticulin family.

It is found in the endoplasmic reticulum lumen. In terms of biological role, molecular calcium-binding chaperone promoting folding, oligomeric assembly and quality control in the ER via the calreticulin/calnexin cycle. This lectin may interact transiently with almost all of the monoglucosylated glycoproteins that are synthesized in the ER. Probably by controlling the folding of extracellular matrix protein unc-52/Perlecan, may play a role in the formation of fibrous organelles, a hemidesmosome-like structure attaching muscles to the epidermis. Protects dopaminergic neurons against oxidative stress-induced neurodegeneration. The sequence is that of Calreticulin (crt-1) from Caenorhabditis briggsae.